We begin with the raw amino-acid sequence, 124 residues long: Small ribosomal subunit protein uS13 (124 aa).

The tract at residues P99 to K124 is disordered. The span at K113–K124 shows a compositional bias: basic residues.

Belongs to the universal ribosomal protein uS13 family. Part of the 30S ribosomal subunit. Forms a loose heterodimer with protein S19. Forms two bridges to the 50S subunit in the 70S ribosome.

Its function is as follows. Located at the top of the head of the 30S subunit, it contacts several helices of the 16S rRNA. In the 70S ribosome it contacts the 23S rRNA (bridge B1a) and protein L5 of the 50S subunit (bridge B1b), connecting the 2 subunits; these bridges are implicated in subunit movement. Contacts the tRNAs in the A and P-sites. The chain is Small ribosomal subunit protein uS13 from Lachnospira eligens (strain ATCC 27750 / DSM 3376 / VPI C15-48 / C15-B4) (Eubacterium eligens).